Reading from the N-terminus, the 479-residue chain is Integrator complex subunit 12 (479 aa).

The disordered stretch occupies residues 57-140 (SKVSLPKMTK…SPIAFQTKDI (84 aa)). Low complexity predominate over residues 70 to 90 (KSSSSSSASSSITTTSSSKSS). Basic and acidic residues predominate over residues 91 to 128 (TSEKSKKESEKRTLEKIRVDPGEGVEPPKKPRLEKQDS). The PHD-type zinc-finger motif lies at 161-217 (GLACVVCRQMTVTSGNQLVECQECHNLYHQECHKPQVTDKDVNDPRLVWYCARCTRQ). Disordered regions lie at residues 221–241 (MAQKTQKPPQKPAPALATTVP), 274–293 (TAASGNSSSSSSSSSSLPPG), and 305–479 (SNVG…KLKK). Composition is skewed to low complexity over residues 223 to 239 (QKTQKPPQKPAPALATT) and 280 to 289 (SSSSSSSSSS). Residues 305 to 328 (SNVGPSSTKLSTSQSGNSKTSPAA) show a composition bias toward polar residues. Residues 354-364 (SSAGSGNGNNG) show a composition bias toward gly residues. Positions 399–411 (GSLSPGAAPSSSL) are enriched in low complexity. Gly residues predominate over residues 412 to 428 (GGNGGSGGNGAGNGGNS). Over residues 429–451 (AGSSSSSGNNNNNGAKASADGKA) the composition is skewed to low complexity. Over residues 466 to 479 (QMVKKKAAQKKLKK) the composition is skewed to basic residues.

Belongs to the Integrator subunit 12 family. Component of the Integrator complex, composed of core subunits INTS1, INTS2, INTS3, INTS4, INTS5, INTS6, INTS7, INTS8, INTS9/RC74, INTS10, INTS11/CPSF3L, INTS12, INTS13, INTS14 and INTS15. The core complex associates with protein phosphatase 2A subunits PPP2CA and PPP2R1A, to form the Integrator-PP2A (INTAC) complex.

Its subcellular location is the nucleus. Its function is as follows. Component of the integrator complex, a multiprotein complex that terminates RNA polymerase II (Pol II) transcription in the promoter-proximal region of genes. The integrator complex provides a quality checkpoint during transcription elongation by driving premature transcription termination of transcripts that are unfavorably configured for transcriptional elongation: the complex terminates transcription by (1) catalyzing dephosphorylation of the C-terminal domain (CTD) of Pol II subunit POLR2A/RPB1 and SUPT5H/SPT5, (2) degrading the exiting nascent RNA transcript via endonuclease activity and (3) promoting the release of Pol II from bound DNA. The integrator complex is also involved in terminating the synthesis of non-coding Pol II transcripts, such as enhancer RNAs (eRNAs), small nuclear RNAs (snRNAs), telomerase RNAs and long non-coding RNAs (lncRNAs). The polypeptide is Integrator complex subunit 12 (ints12) (Danio rerio (Zebrafish)).